The primary structure comprises 895 residues: Eukaryotic translation initiation factor 3 subunit C (895 aa).

The segment at 1 to 108 (MSGFFRKVGD…DSDSEEEVKK (108 aa)) is disordered. 2 stretches are compositionally biased toward acidic residues: residues 11-31 (SDSE…ESGD) and 52-75 (DDSD…DDDN). A PCI domain is found at 638 to 812 (FHMHINLELL…NVVSFHRLEL (175 aa)). Basic and acidic residues predominate over residues 838–860 (DAKLGEGKEQRSGAGGERGDREG). Positions 838–895 (DAKLGEGKEQRSGAGGERGDREGGQPGGRRERRGGSAARGRGRGRGRAQQFQALGQKV) are disordered. The span at 884-895 (RAQQFQALGQKV) shows a compositional bias: low complexity.

It belongs to the eIF-3 subunit C family. Component of the eukaryotic translation initiation factor 3 (eIF-3) complex.

It localises to the cytoplasm. In terms of biological role, component of the eukaryotic translation initiation factor 3 (eIF-3) complex, which is involved in protein synthesis of a specialized repertoire of mRNAs and, together with other initiation factors, stimulates binding of mRNA and methionyl-tRNAi to the 40S ribosome. The eIF-3 complex specifically targets and initiates translation of a subset of mRNAs involved in cell proliferation. In Mycosarcoma maydis (Corn smut fungus), this protein is Eukaryotic translation initiation factor 3 subunit C.